Reading from the N-terminus, the 555-residue chain is GPI-anchor transamidase component PIGS (555 aa).

At 2 to 18 (AAAGAAATDLEVVRGKR) the chain is on the cytoplasmic side. 2 residues coordinate a cardiolipin: Arg-15 and Arg-18. The chain crosses the membrane as a helical span at residues 19–39 (SALFFAAVAILLGLPLWWKTT). At 40–517 (ETYRAPLPYS…LHLLYFPDDQ (478 aa)) the chain is on the lumenal side. 2 N-linked (GlcNAc...) asparagine glycosylation sites follow: Asn-267 and Asn-370. The helical transmembrane segment at 518–532 (KFAIYIPLFLPMAVP) threads the bilayer. Residues 533–555 (ILLSLVKIFQETRKSWKKPEKID) lie on the Cytoplasmic side of the membrane.

Belongs to the PIGS family. As to quaternary structure, heteropentamer. Part of the GPI-anchor transamidase complex, consisting of PIGK, PIGT, PIGS, PIGU and GAA1.

It localises to the endoplasmic reticulum membrane. It functions in the pathway glycolipid biosynthesis; glycosylphosphatidylinositol-anchor biosynthesis. Its function is as follows. Component of the glycosylphosphatidylinositol-anchor (GPI-anchor) transamidase (GPI-T) complex that catalyzes the formation of the linkage between a proprotein and a GPI-anchor and participates in GPI anchored protein biosynthesis. The polypeptide is GPI-anchor transamidase component PIGS (Mus musculus (Mouse)).